Reading from the N-terminus, the 744-residue chain is Kinesin-like protein KIF2A (744 aa).

The segment at L66–Q186 is disordered. Position 75 is a phosphoserine (S75). Phosphothreonine is present on residues T78 and T97. Phosphoserine is present on S100. K102 carries the post-translational modification N6-acetyllysine. Positions F123–S140 are enriched in polar residues. Phosphoserine occurs at positions 135 and 140. Positions R154 to D187 form a coiled coil. Positions C159–Q186 are enriched in basic and acidic residues. Residues R223–F553 enclose the Kinesin motor domain. G313 to T320 provides a ligand contact to ATP. Residues A698–N737 are a coiled coil.

This sequence belongs to the TRAFAC class myosin-kinesin ATPase superfamily. Kinesin family. MCAK/KIF2 subfamily. As to quaternary structure, interacts with AURKA and PLK1. Interacts with PSRC1. Interacts with MCRS1; the interaction enhances recruitment of KIF2A to the minus ends of spindle microtubules which promotes chromosome alignment.

Its subcellular location is the cytoplasm. It is found in the cytoskeleton. It localises to the microtubule organizing center. The protein localises to the centrosome. The protein resides in the spindle pole. Its subcellular location is the spindle. Functionally, plus end-directed microtubule-dependent motor required for normal brain development. May regulate microtubule dynamics during axonal growth. Required for normal progression through mitosis. Required for normal congress of chromosomes at the metaphase plate. Required for normal spindle dynamics during mitosis. Promotes spindle turnover. Implicated in formation of bipolar mitotic spindles. Has microtubule depolymerization activity. The chain is Kinesin-like protein KIF2A from Pongo abelii (Sumatran orangutan).